The primary structure comprises 232 residues: 2,3,4,5-tetrahydropyridine-2,6-dicarboxylate N-acetyltransferase (232 aa).

The protein belongs to the transferase hexapeptide repeat family. DapH subfamily.

The catalysed reaction is (S)-2,3,4,5-tetrahydrodipicolinate + acetyl-CoA + H2O = L-2-acetamido-6-oxoheptanedioate + CoA. It functions in the pathway amino-acid biosynthesis; L-lysine biosynthesis via DAP pathway; LL-2,6-diaminopimelate from (S)-tetrahydrodipicolinate (acetylase route): step 1/3. In terms of biological role, catalyzes the transfer of an acetyl group from acetyl-CoA to tetrahydrodipicolinate. In Kosmotoga olearia (strain ATCC BAA-1733 / DSM 21960 / TBF 19.5.1), this protein is 2,3,4,5-tetrahydropyridine-2,6-dicarboxylate N-acetyltransferase.